The primary structure comprises 220 residues: Octanoyltransferase (220 aa).

The BPL/LPL catalytic domain occupies 27–208 (PGTADEIWLC…QLARAHGHAV (182 aa)). Residues 66 to 73 (RGGQVTYH), 139 to 141 (ALG), and 152 to 154 (GLA) contribute to the substrate site. Cys-170 acts as the Acyl-thioester intermediate in catalysis.

It belongs to the LipB family.

The protein resides in the cytoplasm. The enzyme catalyses octanoyl-[ACP] + L-lysyl-[protein] = N(6)-octanoyl-L-lysyl-[protein] + holo-[ACP] + H(+). The protein operates within protein modification; protein lipoylation via endogenous pathway; protein N(6)-(lipoyl)lysine from octanoyl-[acyl-carrier-protein]: step 1/2. In terms of biological role, catalyzes the transfer of endogenously produced octanoic acid from octanoyl-acyl-carrier-protein onto the lipoyl domains of lipoate-dependent enzymes. Lipoyl-ACP can also act as a substrate although octanoyl-ACP is likely to be the physiological substrate. This is Octanoyltransferase from Bordetella parapertussis (strain 12822 / ATCC BAA-587 / NCTC 13253).